The following is a 69-amino-acid chain: AKDGYLVSKSTGCKYECFWLGKNEGCDKECKAPNQGGGYGYCHAFACWCENLPESTPTYPIPGKSCGKK.

Residue Ala-1 is a signal peptide. One can recognise an LCN-type CS-alpha/beta domain in the interval 2–67 (KDGYLVSKST…TYPIPGKSCG (66 aa)). 4 disulfide bridges follow: Cys-13/Cys-66, Cys-17/Cys-42, Cys-26/Cys-47, and Cys-30/Cys-49. Cys-66 is modified (cysteine amide). A propeptide spanning residues 67–69 (GKK) is cleaved from the precursor.

It belongs to the long (4 C-C) scorpion toxin superfamily. Sodium channel inhibitor family. Beta subfamily. Expressed by the venom gland.

The protein resides in the secreted. Beta toxins bind voltage-independently at site-4 of sodium channels (Nav) and shift the voltage of activation toward more negative potentials thereby affecting sodium channel activation and promoting spontaneous and repetitive firing. The sequence is that of Neurotoxin Cex5 from Centruroides exilicauda (Bark scorpion).